Reading from the N-terminus, the 581-residue chain is Arginine--tRNA ligase (581 aa).

Residues 123–133 carry the 'HIGH' region motif; that stretch reads PNVAKEMHVGH.

It belongs to the class-I aminoacyl-tRNA synthetase family. Monomer.

It is found in the cytoplasm. The enzyme catalyses tRNA(Arg) + L-arginine + ATP = L-arginyl-tRNA(Arg) + AMP + diphosphate. This chain is Arginine--tRNA ligase, found in Blochmanniella pennsylvanica (strain BPEN).